The following is a 360-amino-acid chain: Inhibin alpha chain (360 aa).

Residues 1 to 17 (MWLQLLLLLLAPQGGHG) form the signal peptide. Residues 18-60 (CHGLELDRELVLAKVRALFLDALGPPPVTGEGGDPGVRRLHRR) constitute a propeptide that is removed on maturation. Positions 61-226 (HAVGGFMRRG…PPSGGERARR (166 aa)) are cleaved as a propeptide — inhibin alpha N-terminal region. Residues asparagine 140 and asparagine 262 are each glycosylated (N-linked (GlcNAc...) asparagine). Cystine bridges form between cysteine 256–cysteine 322, cysteine 285–cysteine 357, and cysteine 289–cysteine 359.

This sequence belongs to the TGF-beta family. Dimeric, linked by one or more disulfide bonds. Activin B is a dimer of alpha and beta-B. Inhibin A is a dimer of alpha and beta-A. Inhibin B is a dimer of alpha and beta-B. Interacts with TGFBR3L; this interaction regulates female fertility. Proteolytic processing yields a number of bioactive forms, consisting either solely of the mature alpha chain, of the most N-terminal propeptide linked through a disulfide bond to the mature alpha chain, or of the entire proprotein.

It localises to the secreted. Functionally, inhibins and activins inhibit and activate, respectively, the secretion of follitropin by the pituitary gland. Inhibins/activins are involved in regulating a number of diverse functions such as hypothalamic and pituitary hormone secretion, gonadal hormone secretion, germ cell development and maturation, erythroid differentiation, insulin secretion, nerve cell survival, embryonic axial development or bone growth, depending on their subunit composition. Inhibins appear to oppose the functions of activins. Inhibin A is a dimer of alpha/INHA and beta-A/INHBA that functions as a feedback regulator in the hypothalamic-pituitary-gonadal (HPG) axis. Inhibits the secretion of FSH from the anterior pituitary gland by acting on pituitary gonadotrope cells. Antagonizes activin A by binding to the proteoglycan, betaglycan, and forming a stable complex with and, thereby, sequestering type II activin receptors while excluding type I receptor. In terms of biological role, inhibin B is a dimer of alpha and beta-B that plays a crucial role in the regulation of the reproductive system by inhibiting the secretion of follicle-stimulating hormone (FSH) from the anterior pituitary gland. Thereby, maintains reproductive homeostasis in both males and females. Acts as a more potent suppressor of FSH release than inhibin A. Functions as competitive receptor antagonist binding activin type II receptors with high affinity in the presence of the TGF-beta type III coreceptor/TGFBR3L. The protein is Inhibin alpha chain (INHA) of Bos taurus (Bovine).